Reading from the N-terminus, the 103-residue chain is Sec-independent protein translocase protein TatA (103 aa).

Residues 1–21 (MGNIFSPTHLIVILLIIIVLF) form a helical membrane-spanning segment. The interval 77 to 103 (KRATTRVKGSSSSRKGKTSVVKKQRVK) is disordered. Positions 90 to 103 (RKGKTSVVKKQRVK) are enriched in basic residues.

This sequence belongs to the TatA/E family. In terms of assembly, the Tat system comprises two distinct complexes: a TatABC complex, containing multiple copies of TatA, TatB and TatC subunits, and a separate TatA complex, containing only TatA subunits. Substrates initially bind to the TatABC complex, which probably triggers association of the separate TatA complex to form the active translocon.

It is found in the cell inner membrane. Functionally, part of the twin-arginine translocation (Tat) system that transports large folded proteins containing a characteristic twin-arginine motif in their signal peptide across membranes. TatA could form the protein-conducting channel of the Tat system. This chain is Sec-independent protein translocase protein TatA, found in Bartonella henselae (strain ATCC 49882 / DSM 28221 / CCUG 30454 / Houston 1) (Rochalimaea henselae).